Consider the following 404-residue polypeptide: MAVGMAAPHATYASDPARSRGRLFDEPPSKTRSAFRRDCDRVIHSTAFRRLKHKTQVFVYHEGDHYRTRLTHTLEVAQIARALARQLGLDEDLTEALALAHDLGHPPFGHAGERALDACLDGYGGFDHNAQTLRIVTLLEHRYPDFDGLNLTWETLEGVVKHNGPLADRACNAIGRYQRRGIPVGIADFNRRHDLELWSFASLEAQVAAIADDIAYDAHDIDDGLRAGLFAVDDLKAMPLTAAMIADIARRHPLLDDHRRGAALVRGLISHLITAVVSEAERRLADARPQSVDEVRRHGQALIAFPPAAAEAEALIKAFLKQRMYRHPRVMRVMGEAETIVRDLFARYRDDPAALPAEWLPEDGESRELDAERARRIGNFIAGMTDRFAITEHRRLFDSTPELR.

Residues 1-32 form a disordered region; the sequence is MAVGMAAPHATYASDPARSRGRLFDEPPSKTR. Residues 22 to 32 show a composition bias toward basic and acidic residues; sequence RLFDEPPSKTR. The region spanning 69 to 217 is the HD domain; that stretch reads RLTHTLEVAQ…AAIADDIAYD (149 aa).

Belongs to the dGTPase family. Type 2 subfamily.

In Nitrobacter hamburgensis (strain DSM 10229 / NCIMB 13809 / X14), this protein is Deoxyguanosinetriphosphate triphosphohydrolase-like protein.